The chain runs to 274 residues: Ethanolamine ammonia-lyase small subunit (274 aa).

Residues Val-161, Glu-182, and Cys-211 each contribute to the adenosylcob(III)alamin site.

Belongs to the EutC family. The basic unit is a heterodimer which dimerizes to form tetramers. The heterotetramers trimerize; 6 large subunits form a core ring with 6 small subunits projecting outwards. Adenosylcob(III)alamin serves as cofactor.

The protein resides in the bacterial microcompartment. It catalyses the reaction ethanolamine = acetaldehyde + NH4(+). The protein operates within amine and polyamine degradation; ethanolamine degradation. In terms of biological role, catalyzes the deamination of various vicinal amino-alcohols to oxo compounds. Allows this organism to utilize ethanolamine as the sole source of nitrogen and carbon in the presence of external vitamin B12. This is Ethanolamine ammonia-lyase small subunit from Pseudomonas fluorescens (strain Pf0-1).